The primary structure comprises 436 residues: ATP-dependent protease ATPase subunit HslU (436 aa).

Residues Ile19, 61 to 65, Asp249, Glu314, and Arg386 contribute to the ATP site; that span reads GVGKT.

The protein belongs to the ClpX chaperone family. HslU subfamily. In terms of assembly, a double ring-shaped homohexamer of HslV is capped on each side by a ring-shaped HslU homohexamer. The assembly of the HslU/HslV complex is dependent on binding of ATP.

The protein localises to the cytoplasm. Its function is as follows. ATPase subunit of a proteasome-like degradation complex; this subunit has chaperone activity. The binding of ATP and its subsequent hydrolysis by HslU are essential for unfolding of protein substrates subsequently hydrolyzed by HslV. HslU recognizes the N-terminal part of its protein substrates and unfolds these before they are guided to HslV for hydrolysis. This is ATP-dependent protease ATPase subunit HslU from Bartonella henselae (strain ATCC 49882 / DSM 28221 / CCUG 30454 / Houston 1) (Rochalimaea henselae).